The primary structure comprises 151 residues: Histone H2B.1 (151 aa).

Basic and acidic residues-rich tracts occupy residues 1-28 (MAPKAEKKPAAKKPAEEEPATEKVEKAP) and 36-51 (EKRLPAGKSKEGGEGK). The tract at residues 1 to 58 (MAPKAEKKPAAKKPAEEEPATEKVEKAPAGKKPKAEKRLPAGKSKEGGEGKKGKKKAK) is disordered. 2 positions are modified to N6-acetyllysine: K7 and K37. A Glycyl lysine isopeptide (Lys-Gly) (interchain with G-Cter in ubiquitin) cross-link involves residue K147.

This sequence belongs to the histone H2B family. The nucleosome is a histone octamer containing two molecules each of H2A, H2B, H3 and H4 assembled in one H3-H4 heterotetramer and two H2A-H2B heterodimers. The octamer wraps approximately 147 bp of DNA. Can be acetylated to form H2BK6ac and H2BK33ac. In terms of processing, monoubiquitinated to form H2BK143ub1; may give a specific tag for epigenetic transcriptional activation.

It is found in the nucleus. It localises to the chromosome. Core component of nucleosome. Nucleosomes wrap and compact DNA into chromatin, limiting DNA accessibility to the cellular machineries which require DNA as a template. Histones thereby play a central role in transcription regulation, DNA repair, DNA replication and chromosomal stability. DNA accessibility is regulated via a complex set of post-translational modifications of histones, also called histone code, and nucleosome remodeling. This is Histone H2B.1 from Zea mays (Maize).